The chain runs to 208 residues: FMN-dependent NADH:quinone oxidoreductase (208 aa).

FMN is bound by residues Ser17–Ser19, Met99–Leu102, and Ser143–Gly146.

The protein belongs to the azoreductase type 1 family. Homodimer. The cofactor is FMN.

It catalyses the reaction 2 a quinone + NADH + H(+) = 2 a 1,4-benzosemiquinone + NAD(+). The enzyme catalyses N,N-dimethyl-1,4-phenylenediamine + anthranilate + 2 NAD(+) = 2-(4-dimethylaminophenyl)diazenylbenzoate + 2 NADH + 2 H(+). Its function is as follows. Quinone reductase that provides resistance to thiol-specific stress caused by electrophilic quinones. In terms of biological role, also exhibits azoreductase activity. Catalyzes the reductive cleavage of the azo bond in aromatic azo compounds to the corresponding amines. The protein is FMN-dependent NADH:quinone oxidoreductase of Staphylococcus aureus (strain MRSA252).